We begin with the raw amino-acid sequence, 44 residues long: Thymosin beta (44 aa).

Positions 1–17 are enriched in basic and acidic residues; it reads MSDKPDVKEVESFDKTT. A disordered region spans residues 1–44; sequence MSDKPDVKEVESFDKTTLKKTTTNEKNTLPTKEVIEQEKSGGSD. Over residues 19–32 the composition is skewed to low complexity; that stretch reads KKTTTNEKNTLPTK. Over residues 33–44 the composition is skewed to basic and acidic residues; the sequence is EVIEQEKSGGSD.

Belongs to the thymosin beta family.

It is found in the cytoplasm. It localises to the cytoskeleton. Its function is as follows. Plays an important role in the organization of the cytoskeleton. Binds to and sequesters actin monomers (G actin) and therefore inhibits actin polymerization. This chain is Thymosin beta, found in Gillichthys mirabilis (Long-jawed mudsucker).